The chain runs to 205 residues: Outer-membrane lipoprotein LolB (205 aa).

A signal peptide spans 1–17 (MFLRHVIVFSLIALLTG). A lipid anchor (N-palmitoyl cysteine) is attached at Cys18. Cys18 carries S-diacylglycerol cysteine lipidation.

Belongs to the LolB family. In terms of assembly, monomer.

It is found in the cell outer membrane. Its function is as follows. Plays a critical role in the incorporation of lipoproteins in the outer membrane after they are released by the LolA protein. The chain is Outer-membrane lipoprotein LolB from Pseudomonas savastanoi pv. phaseolicola (strain 1448A / Race 6) (Pseudomonas syringae pv. phaseolicola (strain 1448A / Race 6)).